We begin with the raw amino-acid sequence, 268 residues long: MKVLNLNVFRGFHTQFHSVYKWENRRDLIINLIEAENPDIILFQECNKLQNTEDMEKFMEDLPNYDYVIKYSLPGVFRSRALIIAYNPNKLIKNSEIVKWFSDTPDVPSIGWGNPDDDFGRIILGCEFLEKNSDKKFWIFNVHFDIDVESIRKSILLLPELIDKQCLSDSKIILAGDFNTDDKLLFDTLKNNNFDRLSQTFNTTDKVKLNVSFVGKRDNFGKLTEDLYLDHVFGREVYNYNIYCPFEYDFIINKYIVSDHLPVVIIFE.

This is an uncharacterized protein from Acanthamoeba polyphaga mimivirus (APMV).